We begin with the raw amino-acid sequence, 683 residues long: Dynein, 78 kDa intermediate chain, flagellar outer arm (683 aa).

Residues 1 to 42 form a disordered region; that stretch reads MPALSPAKKGTDKGKTGKKTGKQEQNAQDYIPPPPPMPGDEA. WD repeat units follow at residues 358–398, 407–450, 562–602, and 608–647; these read HTES…DEPI, KLND…LIPE, DLND…LLPL, and VKKAKLTKLVFNPKHPIVLVGDDKGCVTSLKLSPNLRITS.

It belongs to the dynein intermediate chain family. As to quaternary structure, consists of at least 3 heavy chains (alpha, beta and gamma), 2 intermediate chains and 8 light chains.

Its subcellular location is the cytoplasm. It localises to the cytoskeleton. The protein localises to the flagellum axoneme. In terms of biological role, is essential for arm assembly or attachment to the outer doublet microtubule. The polypeptide is Dynein, 78 kDa intermediate chain, flagellar outer arm (ODA9) (Chlamydomonas reinhardtii (Chlamydomonas smithii)).